The following is a 162-amino-acid chain: Beta-lactoglobulin (162 aa).

3 cysteine pairs are disulfide-bonded: cysteine 66–cysteine 160, cysteine 106–cysteine 119, and cysteine 106–cysteine 121.

It belongs to the calycin superfamily. Lipocalin family. In terms of assembly, under physiological conditions beta-lactoglobulin exists as an equilibrium mixture of monomeric and dimeric forms. In terms of processing, alternate disulfide bonds occur in equal amounts.

It localises to the secreted. Lactoglobulin is the primary component of whey, it binds retinol and is probably involved in the transport of that molecule. The polypeptide is Beta-lactoglobulin (LGB) (Ovis aries musimon (Mouflon)).